The following is a 460-amino-acid chain: Elongation factor 1-alpha (460 aa).

Position 2 is a n,N,N-trimethylglycine (glycine 2). N6,N6-dimethyllysine; alternate is present on lysine 3. N6-methyllysine; alternate is present on lysine 3. One can recognise a tr-type G domain in the interval 6 to 241; that stretch reads KTHINLVVIG…DAIDPPTRPT (236 aa). Residues 15-22 are G1; it reads GHVDSGKS. 15–22 is a binding site for GTP; the sequence is GHVDSGKS. Lysine 31 is subject to N6-methyllysine. A G2 region spans residues 71–75; it reads GITID. An N6,N6,N6-trimethyllysine modification is found at lysine 80. The interval 92 to 95 is G3; the sequence is DAPG. Residues 92-96 and 154-157 contribute to the GTP site; these read DAPGH and NKMD. The tract at residues 154 to 157 is G4; sequence NKMD. Residues 193-195 are G5; the sequence is SGF. Lysine 317 is modified (N6,N6-dimethyllysine; alternate). Lysine 317 bears the N6-methyllysine; alternate mark. Lysine 391 carries the post-translational modification N6-methyllysine.

Belongs to the TRAFAC class translation factor GTPase superfamily. Classic translation factor GTPase family. EF-Tu/EF-1A subfamily.

It is found in the cytoplasm. Its function is as follows. This protein promotes the GTP-dependent binding of aminoacyl-tRNA to the A-site of ribosomes during protein biosynthesis. The protein is Elongation factor 1-alpha (TEF) of Coccidioides immitis (strain RS) (Valley fever fungus).